The sequence spans 660 residues: Bifunctional polymyxin resistance protein ArnA (660 aa).

Residues 1–304 (MKTVVFAYHD…MLGLVQGSRL (304 aa)) are formyltransferase ArnAFT. Residue 86–88 (HLI) participates in (6R)-10-formyltetrahydrofolate binding. His-104 acts as the Proton donor; for formyltransferase activity in catalysis. Residues Arg-114 and 136–140 (VKRAD) contribute to the (6R)-10-formyltetrahydrofolate site. Positions 314–660 (RRTRVLILGV…RTVDLTDKPS (347 aa)) are dehydrogenase ArnADH. NAD(+)-binding positions include Asp-347 and 368–369 (DI). UDP-alpha-D-glucuronate is bound by residues Ala-393, Tyr-398, and 432–433 (TS). Residue Glu-434 is the Proton acceptor; for decarboxylase activity of the active site. UDP-alpha-D-glucuronate is bound by residues Arg-460, Asn-492, 526–535 (KLIDGGKQKR), and Tyr-613. The active-site Proton donor; for decarboxylase activity is Arg-619.

This sequence in the N-terminal section; belongs to the Fmt family. UDP-L-Ara4N formyltransferase subfamily. It in the C-terminal section; belongs to the NAD(P)-dependent epimerase/dehydratase family. UDP-glucuronic acid decarboxylase subfamily. Homohexamer, formed by a dimer of trimers.

The enzyme catalyses UDP-alpha-D-glucuronate + NAD(+) = UDP-beta-L-threo-pentopyranos-4-ulose + CO2 + NADH. It carries out the reaction UDP-4-amino-4-deoxy-beta-L-arabinose + (6R)-10-formyltetrahydrofolate = UDP-4-deoxy-4-formamido-beta-L-arabinose + (6S)-5,6,7,8-tetrahydrofolate + H(+). Its pathway is nucleotide-sugar biosynthesis; UDP-4-deoxy-4-formamido-beta-L-arabinose biosynthesis; UDP-4-deoxy-4-formamido-beta-L-arabinose from UDP-alpha-D-glucuronate: step 1/3. It participates in nucleotide-sugar biosynthesis; UDP-4-deoxy-4-formamido-beta-L-arabinose biosynthesis; UDP-4-deoxy-4-formamido-beta-L-arabinose from UDP-alpha-D-glucuronate: step 3/3. It functions in the pathway bacterial outer membrane biogenesis; lipopolysaccharide biosynthesis. In terms of biological role, bifunctional enzyme that catalyzes the oxidative decarboxylation of UDP-glucuronic acid (UDP-GlcUA) to UDP-4-keto-arabinose (UDP-Ara4O) and the addition of a formyl group to UDP-4-amino-4-deoxy-L-arabinose (UDP-L-Ara4N) to form UDP-L-4-formamido-arabinose (UDP-L-Ara4FN). The modified arabinose is attached to lipid A and is required for resistance to polymyxin and cationic antimicrobial peptides. This is Bifunctional polymyxin resistance protein ArnA from Shigella flexneri.